A 469-amino-acid chain; its full sequence is 3-isopropylmalate dehydratase large subunit (469 aa).

[4Fe-4S] cluster is bound by residues Cys347, Cys407, and Cys410.

The protein belongs to the aconitase/IPM isomerase family. LeuC type 1 subfamily. Heterodimer of LeuC and LeuD. [4Fe-4S] cluster is required as a cofactor.

The enzyme catalyses (2R,3S)-3-isopropylmalate = (2S)-2-isopropylmalate. Its pathway is amino-acid biosynthesis; L-leucine biosynthesis; L-leucine from 3-methyl-2-oxobutanoate: step 2/4. Catalyzes the isomerization between 2-isopropylmalate and 3-isopropylmalate, via the formation of 2-isopropylmaleate. This chain is 3-isopropylmalate dehydratase large subunit, found in Synechococcus sp. (strain RCC307).